A 256-amino-acid chain; its full sequence is ATP-dependent dethiobiotin synthetase BioD (256 aa).

13 to 18 (EVGKTY) provides a ligand contact to ATP. T17 provides a ligand contact to Mg(2+). The active site involves K38. Residue S42 coordinates substrate. ATP is bound by residues D56, 118–121 (EGAG), and 187–188 (NR). The Mg(2+) site is built by D56 and E118.

The protein belongs to the dethiobiotin synthetase family. As to quaternary structure, homodimer. Mg(2+) is required as a cofactor.

It localises to the cytoplasm. The catalysed reaction is (7R,8S)-7,8-diammoniononanoate + CO2 + ATP = (4R,5S)-dethiobiotin + ADP + phosphate + 3 H(+). It participates in cofactor biosynthesis; biotin biosynthesis; biotin from 7,8-diaminononanoate: step 1/2. Catalyzes a mechanistically unusual reaction, the ATP-dependent insertion of CO2 between the N7 and N8 nitrogen atoms of 7,8-diaminopelargonic acid (DAPA, also called 7,8-diammoniononanoate) to form a ureido ring. This Rhodopirellula baltica (strain DSM 10527 / NCIMB 13988 / SH1) protein is ATP-dependent dethiobiotin synthetase BioD.